The primary structure comprises 27 residues: Delta-conotoxin TsVIA (27 aa).

3 disulfide bridges follow: Cys-1–Cys-17, Cys-8–Cys-21, and Cys-16–Cys-25.

The protein belongs to the conotoxin O1 superfamily. In terms of tissue distribution, expressed by the venom duct.

Its subcellular location is the secreted. Delta-conotoxins bind to site 6 of voltage-gated sodium channels (Nav) and inhibit the inactivation process. This toxin inhibits tetrodotoxin(TTX)-sensitive sodium channels. A test on mouse Nav1.6/SCN8A confirms this sensitivity. This Conus tessulatus (Tessellate cone) protein is Delta-conotoxin TsVIA.